The chain runs to 226 residues: UPF0173 metal-dependent hydrolase Tpet_1587 (226 aa).

It belongs to the UPF0173 family.

The chain is UPF0173 metal-dependent hydrolase Tpet_1587 from Thermotoga petrophila (strain ATCC BAA-488 / DSM 13995 / JCM 10881 / RKU-1).